The sequence spans 321 residues: Protein ATP1B4 (321 aa).

Positions 1–41 (MEPGMEMNTASEGGTRRGPENKHEEKVQDPNRGEAETKAEM) are disordered. The Cytoplasmic portion of the chain corresponds to 1–72 (MEPGMEMNTA…RTCMGRTAKS (72 aa)). Positions 14–41 (GTRRGPENKHEEKVQDPNRGEAETKAEM) are enriched in basic and acidic residues. Residues 73–93 (WGLILLFYFIFYTCLAGMFAF) traverse the membrane as a helical segment. The Extracellular portion of the chain corresponds to 94 to 321 (CMYVMLLTLS…RIIFTLSIGK (228 aa)). N-linked (GlcNAc...) asparagine glycans are attached at residues Asn132, Asn176, and Asn193. The cysteines at positions 165 and 184 are disulfide-linked. Intrachain disulfides connect Cys194–Cys210 and Cys233–Cys293. N-linked (GlcNAc...) asparagine glycans are attached at residues Asn239, Asn252, and Asn270.

This sequence belongs to the X(+)/potassium ATPases subunit beta family. As to quaternary structure, composed of two subunits: alpha (catalytic) and beta (accessory). Post-translationally, glycosylated. Expressed in skeletal muscle, intestine, heart, brain, retina, inner ear and skin.

The protein resides in the membrane. This is the non-catalytic component of the active enzyme, which catalyzes the hydrolysis of ATP coupled with the exchange of Na(+) and K(+) ions across the plasma membrane. The sequence is that of Protein ATP1B4 (ATP1B4) from Gallus gallus (Chicken).